A 628-amino-acid polypeptide reads, in one-letter code: Nucleoside-triphosphatase 2 (628 aa).

An N-terminal signal peptide occupies residues 1-25; the sequence is MWLPVYVPLLLVFGVSLSLPHGSLG. Glu-236 (proton acceptor) is an active-site residue. A glycan (N-linked (GlcNAc...) asparagine) is linked at Asn-432.

It belongs to the GDA1/CD39 NTPase family. Homotetramer.

The protein localises to the secreted. It is found in the parasitophorous vacuole. It carries out the reaction a ribonucleoside 5'-triphosphate + H2O = a ribonucleoside 5'-diphosphate + phosphate + H(+). Its function is as follows. May perform an important processing step in the conversion of high energy nucleotides prior to uptake by the parasite. NTPAse-II has a specific activity 4.5-fold lower than NTPAse-I in hydrolysis of ATP. The primary difference between these isozymes lies in their ability to hydrolyze nucleoside triphosphate versus diphosphate substrates. While NTPAse-II hydrolyzes ATP to ADP and ADP to AMP at almost the same rate, NTPAse-I hydrolyzes ADP to AMP at a much slower rate (0.7% of the rate for ATP). The chain is Nucleoside-triphosphatase 2 (NTP1) from Toxoplasma gondii.